A 103-amino-acid polypeptide reads, in one-letter code: MGKLTLLLLAILVWLQYSLWFGKNGIHDYTRVNDDVAAQQATNAKLKARNDQLFAEIDDLNGGQEALEERARNELSMTKPGETFYRLVPDASKRAQSAGQNNR.

Over 1–3 (MGK) the chain is Cytoplasmic. A helical membrane pass occupies residues 4–21 (LTLLLLAILVWLQYSLWF). Residues 22–103 (GKNGIHDYTR…RAQSAGQNNR (82 aa)) are Periplasmic-facing. A coiled-coil region spans residues 31-71 (RVNDDVAAQQATNAKLKARNDQLFAEIDDLNGGQEALEERA).

The protein belongs to the FtsB family. As to quaternary structure, part of a complex composed of FtsB, FtsL and FtsQ.

It is found in the cell inner membrane. In terms of biological role, essential cell division protein. May link together the upstream cell division proteins, which are predominantly cytoplasmic, with the downstream cell division proteins, which are predominantly periplasmic. The polypeptide is Cell division protein FtsB (Shigella boydii serotype 18 (strain CDC 3083-94 / BS512)).